The sequence spans 260 residues: Indole-3-glycerol phosphate synthase (260 aa).

Belongs to the TrpC family.

It carries out the reaction 1-(2-carboxyphenylamino)-1-deoxy-D-ribulose 5-phosphate + H(+) = (1S,2R)-1-C-(indol-3-yl)glycerol 3-phosphate + CO2 + H2O. It participates in amino-acid biosynthesis; L-tryptophan biosynthesis; L-tryptophan from chorismate: step 4/5. The protein is Indole-3-glycerol phosphate synthase of Ruminiclostridium cellulolyticum (strain ATCC 35319 / DSM 5812 / JCM 6584 / H10) (Clostridium cellulolyticum).